A 164-amino-acid chain; its full sequence is Transcription antitermination protein NusB (164 aa).

Positions 144-164 are disordered; it reads KNGRGLIDHTPPRAAKTDAKS. A compositionally biased stretch (basic and acidic residues) spans 149-164; sequence LIDHTPPRAAKTDAKS.

Belongs to the NusB family.

In terms of biological role, involved in transcription antitermination. Required for transcription of ribosomal RNA (rRNA) genes. Binds specifically to the boxA antiterminator sequence of the ribosomal RNA (rrn) operons. In Chlorobium phaeovibrioides (strain DSM 265 / 1930) (Prosthecochloris vibrioformis (strain DSM 265)), this protein is Transcription antitermination protein NusB.